A 216-amino-acid polypeptide reads, in one-letter code: Large ribosomal subunit protein uL3 (216 aa).

A disordered region spans residues 134–153 (RATHGNSRSHNVPGSIGMAQ). An N5-methylglutamine modification is found at Gln153.

The protein belongs to the universal ribosomal protein uL3 family. Part of the 50S ribosomal subunit. Forms a cluster with proteins L14 and L19. In terms of processing, methylated by PrmB.

Its function is as follows. One of the primary rRNA binding proteins, it binds directly near the 3'-end of the 23S rRNA, where it nucleates assembly of the 50S subunit. The sequence is that of Large ribosomal subunit protein uL3 from Cupriavidus pinatubonensis (strain JMP 134 / LMG 1197) (Cupriavidus necator (strain JMP 134)).